A 185-amino-acid polypeptide reads, in one-letter code: Urease accessory protein UreE (185 aa).

The disordered stretch occupies residues 153–185 (LRANSAQGHGHSHSHSHDHHGYHHHGDGHWHKH). The span at 162–175 (GHSHSHSHDHHGYH) shows a compositional bias: basic residues. A compositionally biased stretch (basic and acidic residues) spans 176 to 185 (HHGDGHWHKH).

This sequence belongs to the UreE family.

It localises to the cytoplasm. In terms of biological role, involved in urease metallocenter assembly. Binds nickel. Probably functions as a nickel donor during metallocenter assembly. The polypeptide is Urease accessory protein UreE (Haemophilus influenzae (strain 86-028NP)).